The chain runs to 440 residues: Beta-1,3-galactosyl-O-glycosyl-glycoprotein beta-1,6-N-acetylglucosaminyltransferase 3 (440 aa).

Over 1-12 (MKMTGWKKKLCR) the chain is Cytoplasmic. The helical; Signal-anchor for type II membrane protein transmembrane segment at 13–30 (GHHLWALGCYMLLAVVAL) threads the bilayer. The Lumenal segment spans residues 31 to 440 (RLSLRLKCDV…RHKAIYGTEL (410 aa)). 4 disulfide bridges follow: Cys-73–Cys-230, Cys-164–Cys-384, Cys-185–Cys-212, and Cys-393–Cys-425. An N-linked (GlcNAc...) asparagine glycan is attached at Asn-108.

This sequence belongs to the glycosyltransferase 14 family. N-glycosylated.

Its subcellular location is the golgi apparatus membrane. It catalyses the reaction a 3-O-[beta-D-galactosyl-(1-&gt;3)-N-acetyl-alpha-D-galactosaminyl]-L-seryl-[protein] + UDP-N-acetyl-alpha-D-glucosamine = 3-O-{beta-D-galactosyl-(1-&gt;3)-[N-acetyl-beta-D-glucosaminyl-(1-&gt;6)]-N-acetyl-alpha-D-galactosaminyl}-L-seryl-[protein] + UDP + H(+). The catalysed reaction is a 3-O-[beta-D-galactosyl-(1-&gt;3)-N-acetyl-alpha-D-galactosaminyl]-L-threonyl-[protein] + UDP-N-acetyl-alpha-D-glucosamine = a 3-O-{beta-D-galactosyl-(1-&gt;3)-[N-acetyl-beta-D-glucosaminyl-(1-&gt;6)]-N-acetyl-alpha-D-galactosaminyl}-L-threonyl-[protein] + UDP + H(+). The enzyme catalyses a beta-D-Gal-(1-&gt;4)-beta-D-GlcNAc-(1-&gt;3)-beta-D-Gal-(1-&gt;4)-beta-D-GlcNAc derivative + UDP-N-acetyl-alpha-D-glucosamine = a beta-D-Gal-(1-&gt;4)-beta-D-GlcNAc-(1-&gt;3)-[beta-D-GlcNAc-(1-&gt;6)]-beta-D-Gal-(1-&gt;4)-N-acetyl-beta-D-glucosaminyl derivative + UDP + H(+). It carries out the reaction 3-O-[N-acetyl-beta-D-glucosaminyl-(1-&gt;3)-N-acetyl-alpha-D-galactosaminyl]-L-seryl-[protein] + UDP-N-acetyl-alpha-D-glucosamine = 3-O-[N-acetyl-beta-D-glucosaminyl-(1-&gt;3)-[N-acetyl-beta-D-glucosaminyl-(1-&gt;6)]-N-acetyl-alpha-D-galactosaminyl]-L-seryl-[protein] + UDP + H(+). It catalyses the reaction a 3-O-[N-acetyl-beta-D-glucosaminyl-(1-&gt;3)-N-acetyl-alpha-D-galactosaminyl]-L-threonyl-[protein] + UDP-N-acetyl-alpha-D-glucosamine = 3-O-[N-acetyl-beta-D-glucosaminyl-(1-&gt;3)-[N-acetyl-beta-D-glucosaminyl-(1-&gt;6)]-N-acetyl-alpha-D-galactosaminyl]-L-threonyl-[protein] + UDP + H(+). Its pathway is protein modification; protein glycosylation. In terms of biological role, glycosyltransferase that can synthesize all known mucin beta 6 N-acetylglucosaminides. Mediates core 2 and core 4 O-glycan branching, 2 important steps in mucin-type biosynthesis. Also has I-branching enzyme activity by converting linear into branched poly-N-acetyllactosaminoglycans, leading to introduce the blood group I antigen during embryonic development. The sequence is that of Beta-1,3-galactosyl-O-glycosyl-glycoprotein beta-1,6-N-acetylglucosaminyltransferase 3 (GCNT3) from Ovis aries (Sheep).